The primary structure comprises 864 residues: N-alpha-acetyltransferase 16, NatA auxiliary subunit (864 aa).

TPR repeat units lie at residues 46–79 (GETLAMKGLILNCLGKREEAYEFVRKGLRSDVRS), 80–113 (HVCWHVYGLLQRSDKKYDEAIKCYRNALKLDKDN), 148–184 (RASWIGYAIAYHLLKDYDTALKLLEEFRQTQQVPPNK), 224–257 (LLVEEIKGEMLLKLGRLKEASEVFRNLIDWNAEN), 374–407 (IWVQYFLAQHYDKLGQYFLALEYINAVIASTPTL), 408–441 (IELFYMKAKIYKHMGNLKEAAQWMDEAQSLDTAD), and 485–514 (MWFETECISAYQRLGRYGDALKKCHEVERH). The segment at 594–646 (KMLSKQRRAQKKAKVEEERKHTERERQQKNQKKKREEEEEVTSGHKEELIPEK) is disordered. Residues 595–605 (MLSKQRRAQKK) are compositionally biased toward basic residues. Composition is skewed to basic and acidic residues over residues 606–621 (AKVEEERKHTERERQQ) and 635–646 (TSGHKEELIPEK).

As to quaternary structure, component of the N-terminal acetyltransferase A (NatA) complex composed of NAA10 and NAA16. In terms of tissue distribution, highest levels in the kidney and testes. Moderate expression in the liver, thymus and skin.

Auxillary subunit of the N-terminal acetyltransferase A (NatA) complex which displays alpha (N-terminal) acetyltransferase activity. In Mus musculus (Mouse), this protein is N-alpha-acetyltransferase 16, NatA auxiliary subunit (Naa16).